The following is a 272-amino-acid chain: Sordarin/hypoxysordarin biosynthesis cluster protein P (272 aa).

N-linked (GlcNAc...) asparagine glycans are attached at residues Asn6 and Asn23. 2 helical membrane passes run 31 to 51 and 67 to 87; these read FLASIWPYRHMMWIGPMLLFL and AYHMPYSILALHVFISFVDLA. A glycan (N-linked (GlcNAc...) asparagine) is linked at Asn208.

It is found in the membrane. The protein operates within antibiotic biosynthesis. Part of the gene cluster that mediates the biosynthesis of sordarin and hypoxysordarin, glycoside antibiotics with a unique tetracyclic diterpene aglycone structure. First, the geranylgeranyl diphosphate synthase sdnC constructs GGDP from farnesyl diphosphate and isopentenyl diphosphate. The diterpene cyclase sdnA then catalyzes the cyclization of GGDP to afford cycloaraneosene. Cycloaraneosene is then hydroxylated four times by the putative cytochrome P450 monooxygenases sdnB, sdnE, sdnF and sdnH to give a hydroxylated cycloaraneosene derivative such as cycloaraneosene-8,9,13,19-tetraol. Although the order of the hydroxylations is unclear, at least C8, C9 and C13 of the cycloaraneosene skeleton are hydroxylated before the sordaricin formation. Dehydration of the 13-hydroxy group of the hydroxylated cycloaraneosene derivative might be catalyzed by an unassigned hypothetical protein such as sdnG and sdnP to construct the cyclopentadiene moiety. The FAD-dependent oxidoreductase sdnN is proposed to catalyze the oxidation at C9 of the hydroxylated cycloaraneosene derivative and also catalyze the Baeyer-Villiger oxidation to give the lactone intermediate. The presumed lactone intermediate would be hydrolyzed to give an acrolein moiety and a carboxylate moiety. Then, [4+2]cycloaddition would occur between the acrolein moiety and the cyclopentadiene moiety to give sordaricin. SdnN might also be involved in the [4+2]cycloaddition after the hypothesized oxidation to accommodate the oxidized product and prompt the [4+2]cycloaddition. GDP-6-deoxy-D-altrose may be biosynthesized from GDP-D-mannose by the putative GDP-mannose-4,6-dehydratase sdnI and the short-chain dehydrogenase sdnK. The glycosyltransferase sdnJ catalyzes the attachment of 6-deoxy-D-altrose onto the 19-hydroxy group of sordaricin to give 4'-O-demethylsordarin. The methyltransferase sdnD would complete the biosynthesis of sordarin. Sordarin can be further modified into hypoxysordarin. The unique acyl chain at the 3'-hydroxy group of hypoxysordarin would be constructed by an iterative type I PKS sdnO and the trans-acting polyketide methyltransferase sdnL. SdnL would be responsible for the introduction of an alpha-methyl group of the polyketide chain. Alternatively, the beta-lactamase-like protein sdnR might be responsible for the cleavage and transfer of the polyketide chain from the PKS sdnO to sordarin. Two putative cytochrome P450 monooxygenases, sdnQ and sdnT, might catalyze the epoxidations of the polyketide chain to complete the biosynthesis of hypoxysordarin. Transcriptional regulators sdnM and sdnS are presumably encoded for the transcriptional regulation of the expression of the sdn gene cluster. The protein is Sordarin/hypoxysordarin biosynthesis cluster protein P of Sordaria araneosa (Pleurage araneosa).